A 263-amino-acid polypeptide reads, in one-letter code: HTH-type transcriptional regulator KdgR (263 aa).

In terms of domain architecture, HTH iclR-type spans Val13–Leu74. A DNA-binding region (H-T-H motif) is located at residues Ile34 to Gln53. In terms of domain architecture, IclR-ED spans Leu89 to Tyr258.

Its subcellular location is the cytoplasm. Transcriptional repressor that negatively regulates the expression of kdgT, kdgK and kdgA, which encode proteins involved in transport and catabolism of 2-keto-3-deoxygluconate (KDG). Also represses expression of eda, which encodes the Entner-Doudoroff aldolase, by binding to its P2 promoter region. This is HTH-type transcriptional regulator KdgR from Escherichia coli (strain K12).